A 96-amino-acid chain; its full sequence is Protein S100-A10 (96 aa).

An ancestral calcium site region spans residues 62–73 (DDCRKGQVNFRS).

It belongs to the S-100 family. Tetramer of 2 light chains (p10) and 2 heavy chains (annexin II).

Its function is as follows. Because p10 induces the dimerization of annexin II (p36), it may function as a regulator of protein phosphorylation in that the p36 monomer is the preferred target (in vitro) of tyrosine-specific kinase. This Xenopus laevis (African clawed frog) protein is Protein S100-A10 (s100a10).